Here is a 39-residue protein sequence, read N- to C-terminus: Adipokinetic prohormone type 2 (39 aa).

Gln-1 bears the Pyrrolidone carboxylic acid mark. Trp-8 is modified (tryptophan amide).

Belongs to the AKH/HRTH/RPCH family. In terms of assembly, adipokinetic hormone precursor-related peptide (APRP) can form three type of disulfide-bond dimers: p1 (alpha-alpha), p2 (alpha-beta), and p3 (beta-beta).

Its subcellular location is the secreted. Its function is as follows. This hormone, released from cells in the corpora cardiaca, causes release of diglycerides from the fat body and stimulation of muscles to use these diglycerides as an energy source during energy-demanding processes. The protein is Adipokinetic prohormone type 2 of Schistocerca gregaria (Desert locust).